Here is a 1813-residue protein sequence, read N- to C-terminus: Nonribosomal peptide synthetase 1 (1813 aa).

Residues 89–494 (EKARRDPSRQ…GRGDQQVKLR (406 aa)) form an adenylation region. The 76-residue stretch at 624 to 699 (EPQSERERQL…ELAITLKHSD (76 aa)) folds into the Carrier 1 domain. Ser-660 bears the O-(pantetheine 4'-phosphoryl)serine mark. Residues 738-1159 (DVYPCTTLQE…LPMTDDELAE (422 aa)) form a condensation 1 region. One can recognise a Carrier 2 domain in the interval 1282 to 1358 (QVTTPKQQKL…DMADIAKESL (77 aa)). Residue Ser-1319 is modified to O-(pantetheine 4'-phosphoryl)serine. The tract at residues 1427-1806 (FYLDAAVDQS…STLFQTDVME (380 aa)) is condensation 2.

It belongs to the NRP synthetase family.

Its pathway is siderophore biosynthesis. In terms of biological role, nonribosomal peptide synthetase; part of the gene cluster that mediates the biosynthesis of hydroxamate-containing siderophores that play a critical role in virulence via intracellular iron acquisition during macrophage infection. This Ajellomyces capsulatus (Darling's disease fungus) protein is Nonribosomal peptide synthetase 1.